The sequence spans 220 residues: MAAHCILFSSPAATTSLIFPISNPNTAVSLPSSSFHGVSLKSTINRQSLTLSAAASAAPKPLTVFAATKKAVAVLKGTSSVEGVVTLTQEEDGPTTVNVKITGLTPGPHGFHLHEFGDTTNGCISTGPHFNPNGNTHGAPEDENRHAGDLGNIIANADGVAEATIVDNQIPLTGPNAVVGRAFVVHELADDLGKGGHELSLSTGNAGGRLACGVVGLTPV.

A chloroplast-targeting transit peptide spans 1–66 (MAAHCILFSS…AAPKPLTVFA (66 aa)). Positions 112, 114, and 129 each coordinate Cu cation. An intrachain disulfide couples Cys123 to Cys212. The Zn(2+) site is built by His129, His137, His146, and Asp149. His186 serves as a coordination point for Cu cation.

This sequence belongs to the Cu-Zn superoxide dismutase family. As to quaternary structure, homotetramer. Requires Cu cation as cofactor. The cofactor is Zn(2+).

It is found in the plastid. The protein resides in the chloroplast. It catalyses the reaction 2 superoxide + 2 H(+) = H2O2 + O2. Its function is as follows. Destroys radicals which are normally produced within the cells and which are toxic to biological systems. The chain is Superoxide dismutase [Cu-Zn], chloroplastic (SODCP) from Solidago canadensis var. scabra (Tall goldenrod).